We begin with the raw amino-acid sequence, 198 residues long: Recombination protein RecR (198 aa).

A C4-type zinc finger spans residues 57–72 (CSTCQTLTDQDPCAIC). A Toprim domain is found at 80–175 (RMICVVEGVP…KVTRIAQGVP (96 aa)).

This sequence belongs to the RecR family.

May play a role in DNA repair. It seems to be involved in an RecBC-independent recombinational process of DNA repair. It may act with RecF and RecO. This Anaeromyxobacter dehalogenans (strain 2CP-C) protein is Recombination protein RecR.